The following is a 418-amino-acid chain: Actin-related protein 3B (418 aa).

Belongs to the actin family. ARP3 subfamily. Interacts with the Arp2/3 complex composed of ARP2, ARP3, ARPC1B, ARPC1B/p41-ARC, ARPC2/p34-ARC, ARPC3/p21-ARC, ARPC4/p20-ARC and ARPC5/p16-ARC.

It is found in the cytoplasm. Its subcellular location is the cytoskeleton. The protein localises to the cell projection. Functionally, plays a role in the organization of the actin cytoskeleton. May function as ATP-binding component of the Arp2/3 complex which is involved in regulation of actin polymerization and together with an activating nucleation-promoting factor (NPF) mediates the formation of branched actin networks. May decrease the metastatic potential of tumors. This Mus musculus (Mouse) protein is Actin-related protein 3B (Actr3b).